We begin with the raw amino-acid sequence, 523 residues long: DNA-(apurinic or apyrimidinic site) endonuclease 2 (523 aa).

E42 is a Mg(2+) binding site. The active site involves Y151. Mg(2+)-binding residues include D191, N193, and D294. D191 serves as the catalytic Proton donor/acceptor. Positions 348 to 392 (MKKNKNNSPTQSENVSASASSGSSPTVSRANSVIDVDAYPPEKRR) are disordered. Over residues 353 to 362 (NNSPTQSENV) the composition is skewed to polar residues. Zn(2+) is bound by residues C458, H461, C484, and C508. A GRF-type zinc finger spans residues 458–517 (CEGHKEPCKYLTVRKPGINYGRKFWICARPVGELIKNSNAVSEEDTQPFQCRFFIWDSDW).

Belongs to the DNA repair enzymes AP/ExoA family. Requires Mg(2+) as cofactor. Mn(2+) is required as a cofactor.

Its subcellular location is the nucleus. It carries out the reaction Exonucleolytic cleavage in the 3'- to 5'-direction to yield nucleoside 5'-phosphates.. In terms of biological role, DNA repair enzyme that cleaves apurinic/apyrimidinic (AP) sites and removes 3'-blocking groups present at single strand breaks of damaged DNA. Provides the majority of the AP-endonuclease (APE) activity. Repairs phleomycin D1-induced DNA damage. Plays a role in oxidative damage repair. This chain is DNA-(apurinic or apyrimidinic site) endonuclease 2 (apn2), found in Schizosaccharomyces pombe (strain 972 / ATCC 24843) (Fission yeast).